Here is a 452-residue protein sequence, read N- to C-terminus: tRNA modification GTPase MnmE (452 aa).

Residues Arg24, Glu81, and Arg120 each coordinate (6S)-5-formyl-5,6,7,8-tetrahydrofolate. The region spanning 216-373 (GIKTVIVGAP…LFGAIGRWAD (158 aa)) is the TrmE-type G domain. Residues 226–231 (NVGKSS), 245–251 (SAEPGTT), and 270–273 (DTAG) contribute to the GTP site. Ser230 and Thr251 together coordinate Mg(2+). Lys452 contacts (6S)-5-formyl-5,6,7,8-tetrahydrofolate.

This sequence belongs to the TRAFAC class TrmE-Era-EngA-EngB-Septin-like GTPase superfamily. TrmE GTPase family. In terms of assembly, homodimer. Heterotetramer of two MnmE and two MnmG subunits. Requires K(+) as cofactor.

The protein localises to the cytoplasm. Exhibits a very high intrinsic GTPase hydrolysis rate. Involved in the addition of a carboxymethylaminomethyl (cmnm) group at the wobble position (U34) of certain tRNAs, forming tRNA-cmnm(5)s(2)U34. This chain is tRNA modification GTPase MnmE, found in Opitutus terrae (strain DSM 11246 / JCM 15787 / PB90-1).